An 859-amino-acid polypeptide reads, in one-letter code: Kinesin-like protein KIN-14T (859 aa).

The Kinesin motor domain maps to 91-411; it reads NIRVFCRVKP…LNFATRAKNI (321 aa). ATP is bound at residue 168–175; that stretch reads GQTGTGKT. The stretch at 422-463 forms a coiled coil; that stretch reads QAKKEAVMMNLQKMMEKIEQEREMSLRKMRNLNETLEKLTGK. Residues 511–530 form a disordered region; the sequence is LSGADFSVTPNSSSFKSRRN. Positions 518-530 are enriched in polar residues; that stretch reads VTPNSSSFKSRRN.

It belongs to the TRAFAC class myosin-kinesin ATPase superfamily. Kinesin family. KIN-14 subfamily.

This Arabidopsis thaliana (Mouse-ear cress) protein is Kinesin-like protein KIN-14T.